The primary structure comprises 399 residues: Lipid droplet-regulating VLDL assembly factor AUP1 (399 aa).

The Cytoplasmic portion of the chain corresponds to 1–21 (MEQPSLESMLELQRFPRNPFS). The stretch at 22–42 (LVLLLLYFPFGLCLFLIRLFI) is an intramembrane region. At 43–399 (GAHVFLVSCV…GEEEEEGARG (357 aa)) the chain is on the cytoplasmic side. The CUE domain occupies 284–326 (THIQMAQHVKEVLPQVPLSAIHRDLGHTGCVDTTITNFLEGRV). Positions 332-364 (EEETTGAAEGTSKSRVSRPLPQGFAKKPEDRHL) are disordered.

This sequence belongs to the AUP1 family.

The protein localises to the endoplasmic reticulum membrane. It localises to the lipid droplet. In terms of biological role, plays a role in the translocation of terminally misfolded proteins from the endoplasmic reticulum lumen to the cytoplasm and their degradation by the proteasome. Plays a role in lipid droplet formation. Induces lipid droplet clustering. The polypeptide is Lipid droplet-regulating VLDL assembly factor AUP1 (Xenopus laevis (African clawed frog)).